Consider the following 327-residue polypeptide: Interleukin-12 subunit beta (327 aa).

The N-terminal stretch at 1–22 (MCHQKLTISWFAVVLLASPLMA) is a signal peptide. The 84-residue stretch at 23 to 106 (IWELEKDVYV…LSHSRLLLHK (84 aa)) folds into the Ig-like C2-type domain. A disulfide bridge links Cys-50 with Cys-90. Residues Asn-125, Asn-135, Asn-223, and Asn-315 are each glycosylated (N-linked (GlcNAc...) asparagine). The Fibronectin type-III domain maps to 238 to 327 (PPKNLQLKPL…WSRWVSVPCS (90 aa)).

It belongs to the IL-12B family. In terms of assembly, heterodimer with IL12A; disulfide-linked. The heterodimer is known as interleukin IL-12. Heterodimer with IL23A; disulfide-linked. The heterodimer is known as interleukin IL-23. Also secreted as a monomer. Interacts with NBR1; this interaction promotes IL-12 secretion.

Its subcellular location is the secreted. Cytokine that can act as a growth factor for activated T and NK cells, enhance the lytic activity of NK/lymphokine-activated killer cells, and stimulate the production of IFN-gamma by resting PBMC. Its function is as follows. Associates with IL23A to form the IL-23 interleukin, a heterodimeric cytokine which functions in innate and adaptive immunity. IL-23 may constitute with IL-17 an acute response to infection in peripheral tissues. IL-23 binds to a heterodimeric receptor complex composed of IL12RB1 and IL23R, activates the Jak-Stat signaling cascade, stimulates memory rather than naive T-cells and promotes production of pro-inflammatory cytokines. IL-23 induces autoimmune inflammation and thus may be responsible for autoimmune inflammatory diseases and may be important for tumorigenesis. This Mesocricetus auratus (Golden hamster) protein is Interleukin-12 subunit beta (IL12B).